We begin with the raw amino-acid sequence, 362 residues long: MADSSLVGGGEEPEERVIEAALRPKNLHDFVGQHRVRKQLSLVLEASRMRGRSADHVLLSGPPGLGKTTLSMIIAAEMNAPLRISSGPAIQHAGDLAAILSSLSEGEVLFLDEIHRMSRPAEEMLYMAMEDFRVDIVVGKGAGATAIPLELPPFTLVGATTRAGLLPGPLRDRFGFTGHLEFYSVEELELVLRRSAGLLDLKVNSAGFSEIAGRSRGTPRIANRLLRRVRDWALVHGIEQIDARTASAALDMYEVDKRGLDRLDRSVLEALITKFGGGPVGLSTLAIAVGEEPETVETVAEPYLVREGLLGRTPRGRIAMAPAWTHLGYAVPEGVFGQEALALFEVEDLGVEPVAEWLPNGQ.

A large ATPase domain (RuvB-L) region spans residues 1–183; sequence MADSSLVGGG…FGFTGHLEFY (183 aa). Residues Leu-22, Arg-23, Gly-64, Lys-67, Thr-68, Thr-69, 130–132, Arg-173, Tyr-183, and Arg-220 contribute to the ATP site; that span reads EDF. A Mg(2+)-binding site is contributed by Thr-68. The segment at 184-254 is small ATPAse domain (RuvB-S); the sequence is SVEELELVLR…TASAALDMYE (71 aa). The interval 257–362 is head domain (RuvB-H); that stretch reads KRGLDRLDRS…PVAEWLPNGQ (106 aa). DNA contacts are provided by Arg-312 and Arg-317.

Belongs to the RuvB family. Homohexamer. Forms an RuvA(8)-RuvB(12)-Holliday junction (HJ) complex. HJ DNA is sandwiched between 2 RuvA tetramers; dsDNA enters through RuvA and exits via RuvB. An RuvB hexamer assembles on each DNA strand where it exits the tetramer. Each RuvB hexamer is contacted by two RuvA subunits (via domain III) on 2 adjacent RuvB subunits; this complex drives branch migration. In the full resolvosome a probable DNA-RuvA(4)-RuvB(12)-RuvC(2) complex forms which resolves the HJ.

The protein resides in the cytoplasm. It catalyses the reaction ATP + H2O = ADP + phosphate + H(+). The RuvA-RuvB-RuvC complex processes Holliday junction (HJ) DNA during genetic recombination and DNA repair, while the RuvA-RuvB complex plays an important role in the rescue of blocked DNA replication forks via replication fork reversal (RFR). RuvA specifically binds to HJ cruciform DNA, conferring on it an open structure. The RuvB hexamer acts as an ATP-dependent pump, pulling dsDNA into and through the RuvAB complex. RuvB forms 2 homohexamers on either side of HJ DNA bound by 1 or 2 RuvA tetramers; 4 subunits per hexamer contact DNA at a time. Coordinated motions by a converter formed by DNA-disengaged RuvB subunits stimulates ATP hydrolysis and nucleotide exchange. Immobilization of the converter enables RuvB to convert the ATP-contained energy into a lever motion, pulling 2 nucleotides of DNA out of the RuvA tetramer per ATP hydrolyzed, thus driving DNA branch migration. The RuvB motors rotate together with the DNA substrate, which together with the progressing nucleotide cycle form the mechanistic basis for DNA recombination by continuous HJ branch migration. Branch migration allows RuvC to scan DNA until it finds its consensus sequence, where it cleaves and resolves cruciform DNA. The polypeptide is Holliday junction branch migration complex subunit RuvB (Arthrobacter sp. (strain FB24)).